Here is a 354-residue protein sequence, read N- to C-terminus: MKLQTTYPSNNYPIYVERGAIDHISTYIDQFDQSFILIDEYVNQYFANKFDDILSYENVHKVIIPAGEKTKTFHQYQETLEYILSHHVTRNTAIIAVGGGATGDFAGFVAATLLRGVHFIQVPTTILAHDSSVGGKVGINSKQGKNLIGAFYRPTAVIYDLDFLKTLPFEQILSGYAEVYKHALLNGESTTQEIEQHFKDREILQSLNGMDKYIAKGIETKLDIVVADEKEQGVRKFLNLGHTFGHAVEYYHKIPHGHAVMVGIIYQFIVANALFDSKHEINHYIQYLIQLGYPLDMITDLDFETLYEYMLSDKKNDKQGVQMVLIRQFGDIVVQHVDQLTLQHACEQLKTYFK.

Residues 100–104 (GATGD), 124–125 (TT), Lys-136, Lys-145, and 163–166 (FLKT) each bind NAD(+). Positions 178, 242, and 256 each coordinate Zn(2+).

It belongs to the sugar phosphate cyclases superfamily. Dehydroquinate synthase family. It depends on NAD(+) as a cofactor. Co(2+) serves as cofactor. Zn(2+) is required as a cofactor.

It is found in the cytoplasm. It catalyses the reaction 7-phospho-2-dehydro-3-deoxy-D-arabino-heptonate = 3-dehydroquinate + phosphate. Its pathway is metabolic intermediate biosynthesis; chorismate biosynthesis; chorismate from D-erythrose 4-phosphate and phosphoenolpyruvate: step 2/7. Its function is as follows. Catalyzes the conversion of 3-deoxy-D-arabino-heptulosonate 7-phosphate (DAHP) to dehydroquinate (DHQ). The chain is 3-dehydroquinate synthase from Staphylococcus aureus (strain MSSA476).